A 221-amino-acid polypeptide reads, in one-letter code: Deoxyribose-phosphate aldolase (221 aa).

The active-site Proton donor/acceptor is Asp89. Catalysis depends on Lys151, which acts as the Schiff-base intermediate with acetaldehyde. Lys180 serves as the catalytic Proton donor/acceptor.

It belongs to the DeoC/FbaB aldolase family. DeoC type 1 subfamily.

It is found in the cytoplasm. The catalysed reaction is 2-deoxy-D-ribose 5-phosphate = D-glyceraldehyde 3-phosphate + acetaldehyde. It functions in the pathway carbohydrate degradation; 2-deoxy-D-ribose 1-phosphate degradation; D-glyceraldehyde 3-phosphate and acetaldehyde from 2-deoxy-alpha-D-ribose 1-phosphate: step 2/2. Catalyzes a reversible aldol reaction between acetaldehyde and D-glyceraldehyde 3-phosphate to generate 2-deoxy-D-ribose 5-phosphate. This Mesomycoplasma hyopneumoniae (strain J / ATCC 25934 / NCTC 10110) (Mycoplasma hyopneumoniae) protein is Deoxyribose-phosphate aldolase.